The following is a 938-amino-acid chain: Isoleucine--tRNA ligase (938 aa).

Positions 58–68 (PYANGSIHIGH) match the 'HIGH' region motif. N6-acetyllysine is present on K183. E561 is an L-isoleucyl-5'-AMP binding site. Residues 602 to 606 (KMSKS) carry the 'KMSKS' region motif. Residue K605 coordinates ATP. Residues C901, C904, C921, and C924 each coordinate Zn(2+).

It belongs to the class-I aminoacyl-tRNA synthetase family. IleS type 1 subfamily. Monomer. Zn(2+) is required as a cofactor.

The protein localises to the cytoplasm. The catalysed reaction is tRNA(Ile) + L-isoleucine + ATP = L-isoleucyl-tRNA(Ile) + AMP + diphosphate. Catalyzes the attachment of isoleucine to tRNA(Ile). As IleRS can inadvertently accommodate and process structurally similar amino acids such as valine, to avoid such errors it has two additional distinct tRNA(Ile)-dependent editing activities. One activity is designated as 'pretransfer' editing and involves the hydrolysis of activated Val-AMP. The other activity is designated 'posttransfer' editing and involves deacylation of mischarged Val-tRNA(Ile). This chain is Isoleucine--tRNA ligase, found in Shigella flexneri.